A 212-amino-acid chain; its full sequence is Ribonuclease HII (212 aa).

The region spanning 28 to 212 (SLIAGIDEVG…KSFAPVRQVF (185 aa)) is the RNase H type-2 domain. Residues D34, E35, and D127 each contribute to the a divalent metal cation site.

The protein belongs to the RNase HII family. It depends on Mn(2+) as a cofactor. Requires Mg(2+) as cofactor.

It is found in the cytoplasm. The catalysed reaction is Endonucleolytic cleavage to 5'-phosphomonoester.. Its function is as follows. Endonuclease that specifically degrades the RNA of RNA-DNA hybrids. The sequence is that of Ribonuclease HII from Chlamydia abortus (strain DSM 27085 / S26/3) (Chlamydophila abortus).